The sequence spans 497 residues: Probable cytosol aminopeptidase (497 aa).

Residues lysine 263 and aspartate 268 each coordinate Mn(2+). The active site involves lysine 275. Mn(2+)-binding residues include aspartate 286, aspartate 345, and glutamate 347. The active site involves arginine 349.

It belongs to the peptidase M17 family. The cofactor is Mn(2+).

It is found in the cytoplasm. It catalyses the reaction Release of an N-terminal amino acid, Xaa-|-Yaa-, in which Xaa is preferably Leu, but may be other amino acids including Pro although not Arg or Lys, and Yaa may be Pro. Amino acid amides and methyl esters are also readily hydrolyzed, but rates on arylamides are exceedingly low.. The catalysed reaction is Release of an N-terminal amino acid, preferentially leucine, but not glutamic or aspartic acids.. Presumably involved in the processing and regular turnover of intracellular proteins. Catalyzes the removal of unsubstituted N-terminal amino acids from various peptides. The sequence is that of Probable cytosol aminopeptidase from Allorhizobium ampelinum (strain ATCC BAA-846 / DSM 112012 / S4) (Agrobacterium vitis (strain S4)).